Consider the following 259-residue polypeptide: Imidazole glycerol phosphate synthase subunit HisF (259 aa).

Residues Asp-11 and Asp-130 contribute to the active site.

This sequence belongs to the HisA/HisF family. As to quaternary structure, heterodimer of HisH and HisF.

It localises to the cytoplasm. The catalysed reaction is 5-[(5-phospho-1-deoxy-D-ribulos-1-ylimino)methylamino]-1-(5-phospho-beta-D-ribosyl)imidazole-4-carboxamide + L-glutamine = D-erythro-1-(imidazol-4-yl)glycerol 3-phosphate + 5-amino-1-(5-phospho-beta-D-ribosyl)imidazole-4-carboxamide + L-glutamate + H(+). It participates in amino-acid biosynthesis; L-histidine biosynthesis; L-histidine from 5-phospho-alpha-D-ribose 1-diphosphate: step 5/9. Its function is as follows. IGPS catalyzes the conversion of PRFAR and glutamine to IGP, AICAR and glutamate. The HisF subunit catalyzes the cyclization activity that produces IGP and AICAR from PRFAR using the ammonia provided by the HisH subunit. This Oleidesulfovibrio alaskensis (strain ATCC BAA-1058 / DSM 17464 / G20) (Desulfovibrio alaskensis) protein is Imidazole glycerol phosphate synthase subunit HisF.